The chain runs to 318 residues: Ribosomal RNA small subunit methyltransferase H (318 aa).

S-adenosyl-L-methionine contacts are provided by residues 37–39, Asp-57, Phe-83, Asp-104, and Gln-111; that span reads GGH.

Belongs to the methyltransferase superfamily. RsmH family.

The protein localises to the cytoplasm. It catalyses the reaction cytidine(1402) in 16S rRNA + S-adenosyl-L-methionine = N(4)-methylcytidine(1402) in 16S rRNA + S-adenosyl-L-homocysteine + H(+). Specifically methylates the N4 position of cytidine in position 1402 (C1402) of 16S rRNA. This chain is Ribosomal RNA small subunit methyltransferase H, found in Neisseria gonorrhoeae (strain ATCC 700825 / FA 1090).